Consider the following 259-residue polypeptide: Type III pantothenate kinase (259 aa).

6 to 13 (DVGNTNCT) lines the ATP pocket. 107–110 (GSDR) serves as a coordination point for substrate. Catalysis depends on Asp-109, which acts as the Proton acceptor. Residue Asp-129 participates in K(+) binding. ATP is bound at residue Thr-132. Thr-184 lines the substrate pocket.

Belongs to the type III pantothenate kinase family. As to quaternary structure, homodimer. The cofactor is NH4(+). K(+) is required as a cofactor.

It localises to the cytoplasm. The catalysed reaction is (R)-pantothenate + ATP = (R)-4'-phosphopantothenate + ADP + H(+). Its pathway is cofactor biosynthesis; coenzyme A biosynthesis; CoA from (R)-pantothenate: step 1/5. Functionally, catalyzes the phosphorylation of pantothenate (Pan), the first step in CoA biosynthesis. In Listeria monocytogenes serotype 4b (strain CLIP80459), this protein is Type III pantothenate kinase.